An 828-amino-acid chain; its full sequence is Periplasmic nitrate reductase (828 aa).

The segment at residues 1 to 31 (MKLSRRSFMKANAVAAAAAAAGLSVPGVARA) is a signal peptide (tat-type signal). The 4Fe-4S Mo/W bis-MGD-type domain occupies 39–95 (IKWDKAPCRFCGTGCGVLVGTQQGRVVACQGDPDAPVNRGLNCIKGYFLPKIMYGKD). Residues Cys46, Cys49, Cys53, and Cys81 each contribute to the [4Fe-4S] cluster site. Mo-bis(molybdopterin guanine dinucleotide) contacts are provided by residues Lys83, Gln150, Asn175, Cys179, 212–219 (WGSNMAEM), 243–247 (STYQH), 262–264 (QSD), Met372, Gln376, Asn482, 508–509 (SD), Lys531, Asp558, and 718–727 (TGRVLEHWHT). Phe794 is a binding site for substrate. The Mo-bis(molybdopterin guanine dinucleotide) site is built by Asn802 and Lys819.

The protein belongs to the prokaryotic molybdopterin-containing oxidoreductase family. NasA/NapA/NarB subfamily. In terms of assembly, component of the periplasmic nitrate reductase NapAB complex composed of NapA and NapB. [4Fe-4S] cluster serves as cofactor. It depends on Mo-bis(molybdopterin guanine dinucleotide) as a cofactor. In terms of processing, predicted to be exported by the Tat system. The position of the signal peptide cleavage has not been experimentally proven.

It is found in the periplasm. The enzyme catalyses 2 Fe(II)-[cytochrome] + nitrate + 2 H(+) = 2 Fe(III)-[cytochrome] + nitrite + H2O. Its function is as follows. Catalytic subunit of the periplasmic nitrate reductase complex NapAB. Receives electrons from NapB and catalyzes the reduction of nitrate to nitrite. This chain is Periplasmic nitrate reductase, found in Escherichia coli O127:H6 (strain E2348/69 / EPEC).